The primary structure comprises 1064 residues: WD repeat-containing protein on Y chromosome (1064 aa).

WD repeat units lie at residues 153–197 (EEVT…IRTA), 326–365 (RVPL…EPSA), 369–408 (GHNG…LLQT), 459–498 (THAA…RKII), 511–550 (IIDI…VVRN), 598–638 (FHTD…RRYS), 746–785 (KTGD…EAEK), and 827–866 (AHLK…LGTL). Positions 914-924 (PAKRAEVKAPE) are enriched in basic and acidic residues. 2 disordered regions span residues 914 to 935 (PAKR…QTDD) and 1023 to 1064 (GSAL…QQSE). The span at 925–935 (DRDEETAQTDD) shows a compositional bias: acidic residues.

The protein is WD repeat-containing protein on Y chromosome of Drosophila pseudoobscura pseudoobscura (Fruit fly).